The sequence spans 372 residues: Galanin receptor type 2 (372 aa).

Residues 1-28 (MNGSGSQGAENTSQEGGSGGWQPEAVLV) lie on the Extracellular side of the membrane. N-linked (GlcNAc...) asparagine glycans are attached at residues N2 and N11. Residues 29-49 (PLFFALIFLVGTVGNALVLAV) traverse the membrane as a helical segment. The Cytoplasmic portion of the chain corresponds to 50–60 (LLRGGQAVSTT). A helical transmembrane segment spans residues 61–81 (NLFILNLGVADLCFILCCVPF). The Extracellular portion of the chain corresponds to 82–99 (QATIYTLDDWVFGSLLCK). C98 and C175 are joined by a disulfide. A helical transmembrane segment spans residues 100-121 (AVHFLIFLTMHASSFTLAAVSL). At 122 to 141 (DRYLAIRYPLHSRELRTPRN) the chain is on the cytoplasmic side. A helical membrane pass occupies residues 142–162 (ALAAIGLIWGLALLFSGPYLS). The Extracellular segment spans residues 163–187 (YYRQSQLANLTVCHPAWSAPRRRAM). The chain crosses the membrane as a helical span at residues 188–208 (DLCTFVFSYLLPVLVLSLTYA). Over 209-237 (RTLRYLWRTVDPVTAGSGSQRAKRKVTRM) the chain is Cytoplasmic. Residues 238–258 (IIIVAVLFCLCWMPHHALILC) traverse the membrane as a helical segment. At 259-260 (VW) the chain is on the extracellular side. Residues 261 to 281 (FGRFPLTRATYALRILSHLVS) traverse the membrane as a helical segment. The Cytoplasmic segment spans residues 282-372 (YANSCVNPIV…ASSRTLDPAC (91 aa)). Residues 353 to 372 (VPPPALPNCTASSRTLDPAC) form a disordered region. Residues 361-372 (CTASSRTLDPAC) show a composition bias toward polar residues.

The protein belongs to the G-protein coupled receptor 1 family.

It localises to the cell membrane. In terms of biological role, receptor for the hormone galanin, GALP and spexin-1. The activity of this receptor is mediated by G proteins that activate the phospholipase C/protein kinase C pathway (via G(q)) and that inhibit adenylyl cyclase (via G(i)). The chain is Galanin receptor type 2 (Galr2) from Rattus norvegicus (Rat).